Consider the following 507-residue polypeptide: Glycerol kinase (507 aa).

Thr-13 is a binding site for ADP. The ATP site is built by Thr-13, Thr-14, and Ser-15. Thr-13 is a binding site for sn-glycerol 3-phosphate. Arg-17 contributes to the ADP binding site. Residues Arg-83, Glu-84, Tyr-135, and Asp-245 each contribute to the sn-glycerol 3-phosphate site. Residues Arg-83, Glu-84, Tyr-135, Asp-245, and Gln-246 each coordinate glycerol. 2 residues coordinate ADP: Thr-267 and Gly-310. ATP-binding residues include Thr-267, Gly-310, Gln-314, and Gly-411. Positions 411 and 415 each coordinate ADP.

It belongs to the FGGY kinase family.

The enzyme catalyses glycerol + ATP = sn-glycerol 3-phosphate + ADP + H(+). It participates in polyol metabolism; glycerol degradation via glycerol kinase pathway; sn-glycerol 3-phosphate from glycerol: step 1/1. Its activity is regulated as follows. Inhibited by fructose 1,6-bisphosphate (FBP). Functionally, key enzyme in the regulation of glycerol uptake and metabolism. Catalyzes the phosphorylation of glycerol to yield sn-glycerol 3-phosphate. The chain is Glycerol kinase from Halorhodospira halophila (strain DSM 244 / SL1) (Ectothiorhodospira halophila (strain DSM 244 / SL1)).